Reading from the N-terminus, the 194-residue chain is MMEQPSTNLTADVLIDEEAEPDLSIWFGCLETARTELAQAAIAAAAVEGCDRGSVGVRICDDATIHPINREFLQHDYPTDVISFPYELEPPMVEGELVASFETAIENASEPSNPLSPREELLLYVVHGTLHIVGHDDQSPEPRAAMRRAEIAAMKLIGIELPLSNDEDSAPEQDDSFDDDASDSSGGIMSGGVS.

Zn(2+) contacts are provided by His127, His131, and Asp137. Residues 162 to 194 are disordered; that stretch reads PLSNDEDSAPEQDDSFDDDASDSSGGIMSGGVS. The segment covering 165–182 has biased composition (acidic residues); it reads NDEDSAPEQDDSFDDDAS.

It belongs to the endoribonuclease YbeY family. Zn(2+) serves as cofactor.

Its subcellular location is the cytoplasm. In terms of biological role, single strand-specific metallo-endoribonuclease involved in late-stage 70S ribosome quality control and in maturation of the 3' terminus of the 16S rRNA. The protein is Endoribonuclease YbeY of Rhodopirellula baltica (strain DSM 10527 / NCIMB 13988 / SH1).